The sequence spans 105 residues: Malonate decarboxylase acyl carrier protein (105 aa).

An O-(phosphoribosyl dephospho-coenzyme A)serine modification is found at Ser-28.

This sequence belongs to the MdcC family. Post-translationally, covalently binds the prosthetic group of malonate decarboxylase.

It localises to the cytoplasm. Functionally, subunit of malonate decarboxylase, it is an acyl carrier protein to which acetyl and malonyl thioester residues are bound via a 2'-(5''-phosphoribosyl)-3'-dephospho-CoA prosthetic group and turn over during the catalytic mechanism. The protein is Malonate decarboxylase acyl carrier protein of Xanthomonas euvesicatoria pv. vesicatoria (strain 85-10) (Xanthomonas campestris pv. vesicatoria).